Consider the following 121-residue polypeptide: Large ribosomal subunit protein uL22 (121 aa).

The protein belongs to the universal ribosomal protein uL22 family. Part of the 50S ribosomal subunit.

This protein binds specifically to 23S rRNA; its binding is stimulated by other ribosomal proteins, e.g. L4, L17, and L20. It is important during the early stages of 50S assembly. It makes multiple contacts with different domains of the 23S rRNA in the assembled 50S subunit and ribosome. In terms of biological role, the globular domain of the protein is located near the polypeptide exit tunnel on the outside of the subunit, while an extended beta-hairpin is found that lines the wall of the exit tunnel in the center of the 70S ribosome. The protein is Large ribosomal subunit protein uL22 of Parasynechococcus marenigrum (strain WH8102).